Reading from the N-terminus, the 217-residue chain is Probable transaldolase (217 aa).

K83 serves as the catalytic Schiff-base intermediate with substrate.

It belongs to the transaldolase family. Type 3B subfamily.

The protein localises to the cytoplasm. It catalyses the reaction D-sedoheptulose 7-phosphate + D-glyceraldehyde 3-phosphate = D-erythrose 4-phosphate + beta-D-fructose 6-phosphate. It functions in the pathway carbohydrate degradation; pentose phosphate pathway; D-glyceraldehyde 3-phosphate and beta-D-fructose 6-phosphate from D-ribose 5-phosphate and D-xylulose 5-phosphate (non-oxidative stage): step 2/3. In terms of biological role, transaldolase is important for the balance of metabolites in the pentose-phosphate pathway. The polypeptide is Probable transaldolase (Fervidobacterium nodosum (strain ATCC 35602 / DSM 5306 / Rt17-B1)).